The following is a 134-amino-acid chain: Large ribosomal subunit protein uL14 (134 aa).

This sequence belongs to the universal ribosomal protein uL14 family. In the 70S ribosome, L14 and L19 interact and together make contacts with the 16S rRNA in bridges B5 and B8. Part of the 50S ribosomal subunit. Forms a cluster with proteins L3 and L19.

Its function is as follows. Forms part of two intersubunit bridges in the 70S ribosome. Binds to 23S rRNA. In Deinococcus radiodurans (strain ATCC 13939 / DSM 20539 / JCM 16871 / CCUG 27074 / LMG 4051 / NBRC 15346 / NCIMB 9279 / VKM B-1422 / R1), this protein is Large ribosomal subunit protein uL14.